A 309-amino-acid polypeptide reads, in one-letter code: Foldase protein PrsA 2 (309 aa).

The first 22 residues, 1–22 (MKQMNKLITGVVTLATVVTLSA), serve as a signal peptide directing secretion. Residue C23 is the site of N-palmitoyl cysteine attachment. The S-diacylglycerol cysteine moiety is linked to residue C23. Residues 146–241 (TPTMTAEIMQ…RTYHIIKVTK (96 aa)) enclose the PpiC domain.

Belongs to the PrsA family.

Its subcellular location is the cell membrane. The catalysed reaction is [protein]-peptidylproline (omega=180) = [protein]-peptidylproline (omega=0). Functionally, plays a major role in protein secretion by helping the post-translocational extracellular folding of several secreted proteins. This chain is Foldase protein PrsA 2, found in Streptococcus pyogenes serotype M6 (strain ATCC BAA-946 / MGAS10394).